The primary structure comprises 445 residues: UNC93-like protein MFSD11 (445 aa).

A helical transmembrane segment spans residues 8–28; sequence LLNIIILGIGFMFMFTAFQTS. N40 carries an N-linked (GlcNAc...) asparagine glycan. The next 4 membrane-spanning stretches (helical) occupy residues 53-73, 74-94, 98-118, and 138-158; these read AIIY…VAVI, GCQM…AMFI, TWSF…LWTA, and IFWA…YLAW. N163 is a glycosylation site (N-linked (GlcNAc...) asparagine). The next 7 membrane-spanning stretches (helical) occupy residues 170–190, 239–259, 277–297, 309–329, 345–365, 385–405, and 415–435; these read RTVF…FFLI, MLLL…YSGV, LIGL…GLFG, PVVI…YLYM, AFIN…GLGD, APAF…AFFY, and LLIL…VEWG.

The protein belongs to the unc-93 family.

The protein localises to the membrane. The chain is UNC93-like protein MFSD11 (mfsd11) from Xenopus tropicalis (Western clawed frog).